Here is a 132-residue protein sequence, read N- to C-terminus: Agouti-signaling protein (132 aa).

A signal peptide spans 1–22 (MDVTRLLLATLLVFLCFFTAYS). An N-linked (GlcNAc...) asparagine glycan is attached at Asn-39. Residues 62–88 (ISRKEAEKKRSSKKEASMKKVARPRTP) form a disordered region. Residues 63-79 (SRKEAEKKRSSKKEASM) show a composition bias toward basic and acidic residues. 5 disulfides stabilise this stretch: Cys-93-Cys-108, Cys-100-Cys-114, Cys-107-Cys-125, Cys-111-Cys-132, and Cys-116-Cys-123. The Agouti domain maps to 93–132 (CVATRDSCKPPAPACCDPCASCQCRFFRSACSCRVLSLNC).

Its subcellular location is the secreted. Functionally, involved in the regulation of melanogenesis. The binding of ASP to MC1R precludes alpha-MSH initiated signaling and thus blocks production of cAMP, leading to a down-regulation of eumelanogenesis (brown/black pigment) and thus increasing synthesis of pheomelanin (yellow/red pigment). The protein is Agouti-signaling protein (ASIP) of Macaca radiata (Bonnet macaque).